Reading from the N-terminus, the 1190-residue chain is Isoleucine--tRNA ligase, cytoplasmic (1190 aa).

Positions 49 to 59 (PFATGLPHYGH) match the 'HIGH' region motif. Positions 271-299 (DKPKAKLSNGPAGDTKKANPKAKGAKPES) are disordered. The short motif at 632-636 (KMAKK) is the 'KMSKS' region element. Lys635 contacts ATP.

This sequence belongs to the class-I aminoacyl-tRNA synthetase family.

The protein localises to the cytoplasm. It localises to the cytosol. It carries out the reaction tRNA(Ile) + L-isoleucine + ATP = L-isoleucyl-tRNA(Ile) + AMP + diphosphate. This is Isoleucine--tRNA ligase, cytoplasmic from Arabidopsis thaliana (Mouse-ear cress).